A 143-amino-acid chain; its full sequence is Potassium voltage-gated channel subfamily E regulatory beta subunit 5 (143 aa).

N-linked (GlcNAc...) asparagine glycans are attached at residues Asn-2 and Asn-25. The chain crosses the membrane as a helical span at residues 61-81 (LYILLIMIFYACLAGGLILAY). At 82–143 (TRSRKLVEAK…PALAQGAERV (62 aa)) the chain is on the cytoplasmic side.

It belongs to the potassium channel KCNE family. In terms of assembly, interacts with KCNQ1; impairs KCNQ1 localization in lipid rafts and only conducts current upon strong and continued depolarization. In terms of tissue distribution, detected in embryonal dorsal root and nerve ganglia, in the somites and in myoepicardial layer of the developing heart wall. Detected at lower levels in the central nervous system (CNS) and in developing limb.

It localises to the membrane. Functionally, potassium channel ancillary subunit that is essential for generation of some native K(+) currents by virtue of formation of heteromeric ion channel complex with voltage-gated potassium (Kv) channel pore-forming alpha subunits. Functions as an inhibitory beta-subunit of the repolarizing cardiac potassium ion channel KCNQ1. The chain is Potassium voltage-gated channel subfamily E regulatory beta subunit 5 (Kcne5) from Mus musculus (Mouse).